Here is a 194-residue protein sequence, read N- to C-terminus: MGLYLGVEGIDGVGKSSVVNLAAEFLEIHGLEVTTVREPSTDIGREALEWDDPYLQALAFTLDRMLTLKRVDFEAADVVLSDRTFLSTLAYQSALGADMRWLLELQRPVPKPDVVYIIDREPLAEDATFDKEFLERVRNRYREAARLIEEEFDVEIKWIEAEDMDKEEIAELIVADARRRLDDPLGIPDDLLEG.

9-16 (GIDGVGKS) contacts ATP.

The protein belongs to the thymidylate kinase family.

It carries out the reaction dTMP + ATP = dTDP + ADP. This chain is Probable thymidylate kinase, found in Methanopyrus kandleri (strain AV19 / DSM 6324 / JCM 9639 / NBRC 100938).